The chain runs to 179 residues: Cell division protein SepF (179 aa).

The interval 22-55 is disordered; that stretch reads LPYEKRDEPVFTSVNSSQEPALPMNQPSQSAGTK. The span at 33–55 shows a compositional bias: polar residues; that stretch reads TSVNSSQEPALPMNQPSQSAGTK.

This sequence belongs to the SepF family. Homodimer. Interacts with FtsZ.

It localises to the cytoplasm. Functionally, cell division protein that is part of the divisome complex and is recruited early to the Z-ring. Probably stimulates Z-ring formation, perhaps through the cross-linking of FtsZ protofilaments. Its function overlaps with FtsA. The sequence is that of Cell division protein SepF from Streptococcus pneumoniae (strain Taiwan19F-14).